We begin with the raw amino-acid sequence, 71 residues long: Small ribosomal subunit protein bS21 (71 aa).

Residues 34–44 (RREHYEKPTSE) are compositionally biased toward basic and acidic residues. The interval 34–71 (RREHYEKPTSERKRKKAAAVKRHAKKLSRDNARRTRLY) is disordered. The segment covering 45–59 (RKRKKAAAVKRHAKK) has biased composition (basic residues). Residues 60–71 (LSRDNARRTRLY) are compositionally biased toward basic and acidic residues.

It belongs to the bacterial ribosomal protein bS21 family.

This Idiomarina loihiensis (strain ATCC BAA-735 / DSM 15497 / L2-TR) protein is Small ribosomal subunit protein bS21.